The sequence spans 499 residues: Dipeptide and tripeptide permease A (499 aa).

The Cytoplasmic segment spans residues 1-34 (MSTANKKPAESVSMNAFKQPRSFYLIFSIELWER). Residues 35 to 55 (FGFYGLQGIMAVYLVKQLGMS) form a helical membrane-spanning segment. Over 56-59 (EADS) the chain is Periplasmic. The chain crosses the membrane as a helical span at residues 60–80 (ITLFSSFSALVYGLVAIGGWL). The Cytoplasmic segment spans residues 81–89 (GDKVLGTKR). The chain crosses the membrane as a helical span at residues 90–110 (VIMLGTIVLAIGYALVAWSGH). Position 111 (D111) is a topological domain, periplasmic. The chain crosses the membrane as a helical span at residues 112–132 (AAIVYFGMATIAVGNGLFKAN). Residues 133-153 (PSALLSTCYEKDDPRLDGAFT) are Cytoplasmic-facing. A helical transmembrane segment spans residues 154 to 174 (MYYMAINIGSFFSMLATPWLA). Over 175-178 (EKFG) the chain is Periplasmic. The chain crosses the membrane as a helical span at residues 179 to 199 (WSVAFSLSFVGMLITLVNFIF). Residues 200-217 (CKKWVKDYGSKPDFAPLH) are Cytoplasmic-facing. A helical transmembrane segment spans residues 218 to 238 (VGKLLATIVGIVVLVAIATWL). The Periplasmic portion of the chain corresponds to 239–246 (LHNQGIAR). A helical transmembrane segment spans residues 247 to 267 (LVLGVVALGIVIIFAKEAFAM). Topologically, residues 268-274 (QGAARRK) are cytoplasmic. Residues 275–295 (MIVAFILMLEAIVFFVLYQQM) traverse the membrane as a helical segment. At 296-320 (PTSLNFFAIRNVEHSILGIAFQPEQ) the chain is on the periplasmic side. Residues 321–341 (FQALNPFWIMIGSPILAAIYN) traverse the membrane as a helical segment. The Cytoplasmic segment spans residues 342–350 (KMGDRLPMP). A helical transmembrane segment spans residues 351–371 (FKFTIGMLLCSGAFLVLPLGA). At 372 to 383 (KFASEAGIVSVN) the chain is on the periplasmic side. The helical transmembrane segment at 384–404 (WLILSYALQSIGELMISGLGL) threads the bilayer. Over 405–414 (AMVAQLVPQR) the chain is Cytoplasmic. A helical transmembrane segment spans residues 415-435 (LMGFIMGSWFLTTAGAAMIAG). Residues 436-459 (KVANLMAVPENVSDPLQSLEVYGR) are Periplasmic-facing. The chain crosses the membrane as a helical span at residues 460-480 (VFMQIGIATGVIAVLMLLTAP). At 481–499 (LLNRMTQEDKPKETDTAHA) the chain is on the cytoplasmic side.

The protein belongs to the major facilitator superfamily. Proton-dependent oligopeptide transporter (POT/PTR) (TC 2.A.17) family. DtpA subfamily.

Its subcellular location is the cell inner membrane. Functionally, proton-dependent permease that transports di- and tripeptides. This Cronobacter turicensis (strain DSM 18703 / CCUG 55852 / LMG 23827 / z3032) protein is Dipeptide and tripeptide permease A.